The primary structure comprises 309 residues: Protein FdhE homolog (309 aa).

It belongs to the FdhE family.

Its subcellular location is the cytoplasm. Its function is as follows. Necessary for formate dehydrogenase activity. The sequence is that of Protein FdhE homolog from Yersinia enterocolitica serotype O:8 / biotype 1B (strain NCTC 13174 / 8081).